Reading from the N-terminus, the 501-residue chain is DELTA-alicitoxin-Pse2a (501 aa).

The signal sequence occupies residues 1–22; the sequence is MSPYFKLSSALIFLAITMEALC. Positions 23–35 are excised as a propeptide; that stretch reads SPIENTSTSNKDN. In terms of domain architecture, MACPF spans 23 to 359; sequence SPIENTSTSN…GFLHFGCSYL (337 aa). A coiled-coil region spans residues 135-159; sequence AAVTNNIASSEEEVQGLSLNLKAYS. An EGF-like domain is found at 388–422; sequence VCKVGPEGCQHHEDCHYRAAFWCECGGPYDLARTC. 3 disulfides stabilise this stretch: Cys389–Cys402, Cys396–Cys410, and Cys412–Cys422.

Its subcellular location is the secreted. The protein localises to the nematocyst. Its function is as follows. Causes lethal toxicity to the shrimp Palaemon paucidence, and hemolytic activity toward sheep red blood cells. In Phyllodiscus semoni (Night anemone), this protein is DELTA-alicitoxin-Pse2a.